A 767-amino-acid chain; its full sequence is Photosystem I P700 chlorophyll a apoprotein A1 (767 aa).

A disordered region spans residues 1 to 22 (MTISPPESGEKNKKVLEDPVKA). A compositionally biased stretch (basic and acidic residues) spans 8 to 22 (SGEKNKKVLEDPVKA). A run of 8 helical transmembrane segments spans residues 76 to 99 (IFSAHFGHLAIIFIWMSAAFFHGA), 162 to 185 (LMALAIGAVIMAALMLHGGIYHYH), 201 to 225 (LNHHIAGLVGLGSLAWAGHCIHIGA), 309 to 327 (IAHHHLAFGVIAIIGGHLY), 368 to 391 (RHAQLSVNLACLGSLSILISHHMY), 407 to 433 (LGLFTHHMWIGALFIVGAGAHAGIAMV), 455 to 477 (ALISHLNWVCMWLGFHSFGLYIH), and 558 to 576 (LMIHHIHAFQIHVTVLILL). [4Fe-4S] cluster contacts are provided by C600 and C609. The next 2 membrane-spanning stretches (helical) occupy residues 616–637 (HVFLALFWMYNCISIVIFHFSW) and 681–703 (ISMYGLMFLGAHFIWAFSLMFLF). H692 provides a ligand contact to divinylchlorophyll a'. M700 and Y708 together coordinate divinyl chlorophyll a. W709 is a phylloquinone binding site. A helical membrane pass occupies residues 741–761 (AVGVAHFLLGGIATTWAFFHA).

Belongs to the PsaA/PsaB family. As to quaternary structure, the PsaA/B heterodimer binds the P700 divinyl chlorophyll special pair and subsequent electron acceptors. PSI consists of a core antenna complex that captures photons, and an electron transfer chain that converts photonic excitation into a charge separation. The cyanobacterial PSI reaction center is composed of one copy each of PsaA,B,C,D,E,F,I,J,K,L,M and X, and forms trimeric complexes. The cofactor is PSI electron transfer chain: 5 divinyl chlorophyll a, 1 divinyl chlorophyll a', 2 phylloquinones and 3 4Fe-4S clusters. PSI core antenna: 90 divinyl chlorophyll a, 22 carotenoids, 3 phospholipids and 1 galactolipid. P700 is a divinyl chlorophyll a/divinyl chlorophyll a' dimer, A0 is one or more divinyl chlorophyll a, A1 is one or both phylloquinones and FX is a shared 4Fe-4S iron-sulfur center..

The protein resides in the cellular thylakoid membrane. It carries out the reaction reduced [plastocyanin] + hnu + oxidized [2Fe-2S]-[ferredoxin] = oxidized [plastocyanin] + reduced [2Fe-2S]-[ferredoxin]. In terms of biological role, psaA and PsaB bind P700, the primary electron donor of photosystem I (PSI), as well as the electron acceptors A0, A1 and FX. PSI is a plastocyanin/cytochrome c6-ferredoxin oxidoreductase, converting photonic excitation into a charge separation, which transfers an electron from the donor P700 chlorophyll pair to the spectroscopically characterized acceptors A0, A1, FX, FA and FB in turn. Oxidized P700 is reduced on the lumenal side of the thylakoid membrane by plastocyanin or cytochrome c6. In Prochlorococcus marinus (strain MIT 9312), this protein is Photosystem I P700 chlorophyll a apoprotein A1.